A 149-amino-acid chain; its full sequence is Large ribosomal subunit protein uL15C (149 aa).

The segment at 21–40 is disordered; the sequence is RIGKHRKQRGGRGNAGGQHH.

This sequence belongs to the universal ribosomal protein uL15 family. In terms of assembly, component of the large ribosomal subunit.

The protein localises to the cytoplasm. Its subcellular location is the cytosol. It localises to the endoplasmic reticulum. Component of the large ribosomal subunit. The ribosome is a large ribonucleoprotein complex responsible for the synthesis of proteins in the cell. This is Large ribosomal subunit protein uL15C (rpl27a-3) from Entamoeba histolytica (strain ATCC 30459 / HM-1:IMSS / ABRM).